A 313-amino-acid chain; its full sequence is Malate dehydrogenase (313 aa).

An NAD(+)-binding site is contributed by 11 to 16 (GAGHTG). Substrate-binding residues include Arg86 and Arg92. NAD(+) contacts are provided by residues Asn99 and 122–124 (LTN). Asn124 and Arg155 together coordinate substrate. Catalysis depends on His179, which acts as the Proton acceptor.

It belongs to the LDH/MDH superfamily. MDH type 3 family.

It catalyses the reaction (S)-malate + NAD(+) = oxaloacetate + NADH + H(+). Its function is as follows. Catalyzes the reversible oxidation of malate to oxaloacetate. The chain is Malate dehydrogenase from Staphylococcus epidermidis (strain ATCC 35984 / DSM 28319 / BCRC 17069 / CCUG 31568 / BM 3577 / RP62A).